Reading from the N-terminus, the 314-residue chain is Cytosolic sulfotransferase 3 (314 aa).

71 to 76 (KSGTLW) serves as a coordination point for 3'-phosphoadenylyl sulfate. The Proton acceptor role is filled by histidine 121. 3'-phosphoadenylyl sulfate-binding positions include arginine 143, serine 151, tyrosine 209, and 275–277 (RKG).

It belongs to the sulfotransferase 1 family.

It is found in the cytoplasm. In terms of biological role, sulfotransferase that utilizes 3'-phospho-5'-adenylyl sulfate (PAPS) as sulfonate donor. This Arabidopsis thaliana (Mouse-ear cress) protein is Cytosolic sulfotransferase 3 (SOT3).